The following is an 808-amino-acid chain: Probable E3 ubiquitin-protein ligase MARCHF10 (808 aa).

3 disordered regions span residues 33-81 (LRRQ…LTEP), 101-268 (QTSV…RKAS), and 284-415 (SRRE…EVGV). Positions 34–49 (RRQEYRRDPNEKKRDQ) are enriched in basic and acidic residues. Over residues 237–249 (QAFQGKNSPQVLS) the composition is skewed to polar residues. Basic and acidic residues-rich tracts occupy residues 330-349 (KNFE…RSEP) and 379-397 (LPDR…ENAK). The segment at 651 to 721 (DSEEEGDLCR…EMCKQGLLVD (71 aa)) adopts an RING-CH-type zinc-finger fold. Zn(2+)-binding residues include C659, C662, C677, C679, H687, C690, C711, and C714. Residues 773-808 (ERERLSRNYPQPRTEENENSELGDGNEGSISQSQVV) form a disordered region.

The enzyme catalyses S-ubiquitinyl-[E2 ubiquitin-conjugating enzyme]-L-cysteine + [acceptor protein]-L-lysine = [E2 ubiquitin-conjugating enzyme]-L-cysteine + N(6)-ubiquitinyl-[acceptor protein]-L-lysine.. The protein operates within protein modification; protein ubiquitination. Functionally, E3 ubiquitin-protein ligase. E3 ubiquitin ligases accept ubiquitin from an E2 ubiquitin-conjugating enzyme in the form of a thioester and then directly transfer the ubiquitin to targeted substrates. In Homo sapiens (Human), this protein is Probable E3 ubiquitin-protein ligase MARCHF10.